A 165-amino-acid polypeptide reads, in one-letter code: Small ribosomal subunit protein uS5 (165 aa).

Residues 13–76 (LEEKVLVVNR…EAARKNLITI (64 aa)) enclose the S5 DRBM domain.

Belongs to the universal ribosomal protein uS5 family. In terms of assembly, part of the 30S ribosomal subunit. Contacts proteins S4 and S8.

Functionally, with S4 and S12 plays an important role in translational accuracy. Its function is as follows. Located at the back of the 30S subunit body where it stabilizes the conformation of the head with respect to the body. This is Small ribosomal subunit protein uS5 from Chlamydia felis (strain Fe/C-56) (Chlamydophila felis).